We begin with the raw amino-acid sequence, 124 residues long: Late embryogenesis abundant protein 37 (124 aa).

A mitochondrion-targeting transit peptide spans 1 to 35 (MSQSLFNLKSLSRSINNTIRMRRYIVITKASQRAY).

This sequence belongs to the LEA type 3 family.

It is found in the mitochondrion. The chain is Late embryogenesis abundant protein 37 from Arabidopsis thaliana (Mouse-ear cress).